We begin with the raw amino-acid sequence, 61 residues long: MAKKALVNKAAGKPRFAVRAYTRCSKCGRPRAVYRKFGLCRICLREMAHAGELPGVQKSSW.

Zn(2+) contacts are provided by cysteine 24, cysteine 27, cysteine 40, and cysteine 43.

It belongs to the universal ribosomal protein uS14 family. Zinc-binding uS14 subfamily. In terms of assembly, part of the 30S ribosomal subunit. Contacts proteins S3 and S10. Zn(2+) serves as cofactor.

Binds 16S rRNA, required for the assembly of 30S particles and may also be responsible for determining the conformation of the 16S rRNA at the A site. The protein is Small ribosomal subunit protein uS14B of Mycobacterium bovis (strain ATCC BAA-935 / AF2122/97).